The sequence spans 527 residues: (3S)-3-amino-3-(3-chloro-4-hydroxyphenyl)propanoyl-[peptidyl-carrier protein SgcC2] monooxygenase (527 aa).

Residues 1–10 (MPHGAEREAS) are compositionally biased toward basic and acidic residues. Positions 1-22 (MPHGAEREASPAEESAGTRPLT) are disordered. Residues 161 to 163 (HAF), 167 to 170 (PVDR), and Thr202 contribute to the FAD site.

Belongs to the FADH(2)-utilizing monooxygenase family. As to quaternary structure, homotetramer.

It carries out the reaction (3S)-3-amino-3-(3-chloro-4-hydroxyphenyl)propanoyl-[SgcC2 peptidyl-carrier protein] + FADH2 + O2 = (3S)-3-amino-3-(3-chloro-4,5-dihydroxyphenyl)propanoyl-[SgcC2 peptidyl-carrier protein] + FAD + H2O + H(+). It functions in the pathway antibiotic biosynthesis. Its activity is regulated as follows. The SgcE6-SgcC hydroxylation activity decreases in the presence of excess FAD. Its function is as follows. Oxygenase component of a two-component system involved in the biosynthesis of the enediyne antitumor antibiotic C-1027. Uses FADH(2) supplied by SgcE6 to catalyze the C-5 hydroxylation of (S)-3-chloro-beta-tyrosyl-S-SgcC2. Can also efficiently catalyze the regioselective hydroxylation of other 3-substituted beta-tyrosyl-S-SgcC2 analogs, including the bromo-, iodo-, fluoro-, and methyl-substituted analogs, but does not accept 3-hydroxy-beta-tyrosyl-S-SgcC2 as a substrate. Is only active with SgcC2 (peptidyl carrier protein)-tethered substrates. The sequence is that of (3S)-3-amino-3-(3-chloro-4-hydroxyphenyl)propanoyl-[peptidyl-carrier protein SgcC2] monooxygenase from Streptomyces globisporus.